We begin with the raw amino-acid sequence, 1350 residues long: MGKKKIDINTREDLFLSYYKEIEKNKFDLLKICSDKNFSKSNFLKAVHCLFSLSYFCKIKDENEEEEGKEEEINDYKVKKSTTGNYYRNSEGKLFKKSNEKDQIDDVSIFYKRLPTIQDFKDTYDKYENCLNSVYYIIRKIKLLHLEYFWEILASCYGTISFIKFFNIFSNEIFSPSENGDSVFIMVGKFFRRKVRAETHYDLIFLKIILANASIPMILKLGVKDIGRFTEKEDIIVSYYRNFSIIHSLRFDNVKEFALVYKTLKNNYPSKKKKKITLFEENGKINVKTSKKDLMLFEFVCKFDCVKIFKKYFLPKPQIINNNDNNEMLECISSGSYSGFDEKSKRKIRIFFSICCRQISPKILKCIVDYVKDDIGFLDLQNRQDIYIGDSAPEKVLFLNCFFGNHKEQRVIDFFNLLTSKSIIICNTIKEKPELYDYRYITLSTVDSTFYFSDSHKGADFGVYTDEINVIINNDDIDYDYIGDDDNDEEIEETKDYGSSSSDIDDFYNVFEPKASMIPNILDSCSLEILKAYIQNITGNGLFKISPSLFLAHDVTRLVRNPKPKTETVVKILEFINTISRLSELSTNGVPFTFLTNRFEIVTSIIMSLHDERSISNSVEPVQWLRALAPFVSNDEMKLIIYKVRTLYNYEPHSNGEIKYTELVRLFDVQYLLTKGKFSLSQFNGFETSIFLNPKLLDGTINSNILNSMIIKDKEKLDLKELFFKEKPLSEAELKEKFEIATKNEKELLDQLKKENDAEKLKKKNKLKKQKNQQQQQQAKQQAQQQKQQHQQNIQQNYENQHIEDQRKFNQQTKGRPISPSSIQNQNLNPTLLQNQNQTSNPTPNLESTKKATPTTTTTTTTNSNTSAIINEIKNQDLNQQQNITENINEIYDVSIGKFKFNKKESNILGRGSNGTLVFKGIWNNRIPVAIKQMQKMFNPLISKEIEILIGLTNKNLNLVGYIDQEEDENCVYLGLTLCDGSLQSLYDQSKLNEFINQNNNQNNNNNNNRVLDLIIGMINGVIFLHDQNIVHNDLNPRNILVKDNRLIISDLGLSKMNVSSTYNFSTNAIPTGQDGYHPVEVLLEKRKTKSVDVFSLGCLIYFIMTNGAHPFGDKFSRLRYITKSKYNLSQLSNLNLVATHLIELMISYDESKRPTLSSVLKHPLFWDSLKKIKFLESSLRLLGDHDFKKFNINKILISCNSNSSSSNSICNSSNSSSSSSSSISSSSCKISSSSCYCVPLPWNQSLDYQLVDSLSNQIEKKVASYKFDQLHDLIRFIRNTLQHYNQIYRDLKQILPNSDILESLKSQQSALNYFESKFPTLIIFLFNHFSAIPEIKNSIHFSNDTCSIF.

N-linked (GlcNAc...) asparagine glycosylation occurs at Asn-37. A helical membrane pass occupies residues 149-169; it reads FWEILASCYGTISFIKFFNIF. The stretch at 731–802 forms a coiled coil; the sequence is EAELKEKFEI…NIQQNYENQH (72 aa). The segment covering 761–771 has biased composition (basic residues); sequence LKKKNKLKKQK. Disordered regions lie at residues 761–795 and 807–864; these read LKKK…QNIQ and RKFN…TTNS. The segment covering 772 to 795 has biased composition (low complexity); sequence NQQQQQQAKQQAQQQKQQHQQNIQ. The span at 809–823 shows a compositional bias: polar residues; sequence FNQQTKGRPISPSSI. Low complexity predominate over residues 824-864; sequence QNQNLNPTLLQNQNQTSNPTPNLESTKKATPTTTTTTTTNS. One can recognise a Protein kinase domain in the interval 903–1166; it reads KKESNILGRG…LSSVLKHPLF (264 aa). ATP contacts are provided by residues 909-917 and Lys-932; that span reads LGRGSNGTL. Asp-1034 functions as the Proton acceptor in the catalytic mechanism. One can recognise a KEN domain in the interval 1169-1346; that stretch reads SLKKIKFLES…KNSIHFSNDT (178 aa).

It belongs to the protein kinase superfamily. Ser/Thr protein kinase family.

The protein localises to the membrane. The catalysed reaction is L-seryl-[protein] + ATP = O-phospho-L-seryl-[protein] + ADP + H(+). It carries out the reaction L-threonyl-[protein] + ATP = O-phospho-L-threonyl-[protein] + ADP + H(+). The polypeptide is Probable serine/threonine-protein kinase irlE (irlE) (Dictyostelium discoideum (Social amoeba)).